The following is a 208-amino-acid chain: Heat shock protein 26 (208 aa).

Phosphoserine is present on residues serine 44, serine 52, and serine 58. The region spanning 71 to 179 (ANRNDIHWPA…KSKERIIQIQ (109 aa)) is the sHSP domain. Residues 187–208 (NVKANESEVKGKENGAPNGKDK) are disordered. Over residues 191–208 (NESEVKGKENGAPNGKDK) the composition is skewed to basic and acidic residues.

It belongs to the small heat shock protein (HSP20) family.

The sequence is that of Heat shock protein 26 (Hsp26) from Drosophila melanogaster (Fruit fly).